Here is a 1746-residue protein sequence, read N- to C-terminus: Non-reducing polyketide synthase ptaA (1746 aa).

The tract at residues 4 to 227 (NSGSGTSPWG…ALPVYGGLCH (224 aa)) is N-terminal acylcarrier protein transacylase domain (SAT). The 436-residue stretch at 361–796 (QSKIAIVGMS…GGNTTIAIEE (436 aa)) folds into the Ketosynthase family 3 (KS3) domain. Catalysis depends on for beta-ketoacyl synthase activity residues Cys534, His670, and His714. Residues 898–1218 (FAFTGQGASY…LGALHLAGIP (321 aa)) form a malonyl-CoA:ACP transacylase (MAT) domain region. Positions 1286–1605 (TSTVHRVIGE…RLLLDRFFSA (320 aa)) are product template (PT) domain. Residues 1290–1425 (HRVIGETFDG…ATLFYGKAND (136 aa)) are N-terminal hotdog fold. One can recognise a PKS/mFAS DH domain in the interval 1290 to 1600 (HRVIGETFDG…FRRYPRLLLD (311 aa)). His1322 acts as the Proton acceptor; for dehydratase activity in catalysis. The C-terminal hotdog fold stretch occupies residues 1452-1600 (VANRFSRNMA…FRRYPRLLLD (149 aa)). Asp1511 functions as the Proton donor; for dehydratase activity in the catalytic mechanism. A Carrier domain is found at 1671–1745 (DSITVKAMAL…DLRAWLLEYY (75 aa)). Ser1705 is subject to O-(pantetheine 4'-phosphoryl)serine.

The catalysed reaction is holo-[ACP] + 8 malonyl-CoA + 8 H(+) = atrochrysone carboxyl-[ACP] + 8 CO2 + 8 CoA + 2 H2O. It functions in the pathway secondary metabolite biosynthesis. In terms of biological role, non-reducing polyketide synthase; part of the gene cluster that mediates the biosynthesis of pestheic acid, a diphenyl ether which is a biosynthetic precursor of the unique chloropupukeananes. The biosynthesis initiates from condensation of acetate and malonate units catalyzed by the non-reducing PKS ptaA. As the ptaA protein is TE/CLC domain-deficient, hydrolysis and Claisen cyclization of the polyketide could be catalyzed by ptaB containing a beta-lactamase domain. The ptaB protein might hydrolyze the thioester bond between the ACP of ptaA and the intermediate to release atrochrysone carboxylic acid, which is spontaneously dehydrated to form endocrocin anthrone. Endocrocin anthrone is then converted to endocrocin, catalyzed by the anthrone oxygenase ptaC. Spontaneous decarboxylation of endocrocin occurs to generate emodin. An O-methyltransferase (ptaH or ptaI) could methylate emodin to form physcion. PtaJ could then catalyze the oxidative cleavage of physcion, and rotation of the intermediate could then afford desmethylisosulochrin. PtaF, a putative NADH-dependent oxidoreductase, might also participate in the oxidative cleavage step. Desmethylisosulochrin is then transformed by another O-methyltransferase (ptaH or ptaI) to form isosulochrin. Chlorination of isosulochrin by ptaM in the cyclohexadienone B ring then produces chloroisosulochrin. PtaE is responsible for the oxidative coupling reactions of both benzophenones isosulochrin and chloroisosulochrin to RES-1214-1 and pestheic acid respectively, regardless of chlorination. This is Non-reducing polyketide synthase ptaA from Pestalotiopsis fici (strain W106-1 / CGMCC3.15140).